The following is a 73-amino-acid chain: Toxin Td4 (73 aa).

An N-terminal signal peptide occupies residues 1–7 (IGMVVEC). Residues 8–70 (KDGYLVGNDG…TWDRATNRCG (63 aa)) form the LCN-type CS-alpha/beta domain. Cystine bridges form between Cys-18–Cys-69, Cys-22–Cys-44, Cys-30–Cys-50, and Cys-34–Cys-52. Arg-71 carries the post-translational modification Arginine amide.

Belongs to the long (4 C-C) scorpion toxin superfamily. Sodium channel inhibitor family. Beta subfamily. In terms of tissue distribution, expressed by the venom gland.

Its subcellular location is the secreted. In terms of biological role, beta toxins bind voltage-independently at site-4 of sodium channels (Nav) and shift the voltage of activation toward more negative potentials thereby affecting sodium channel activation and promoting spontaneous and repetitive firing. The sequence is that of Toxin Td4 from Tityus discrepans (Venezuelan scorpion).